The primary structure comprises 296 residues: 4-diphosphocytidyl-2-C-methyl-D-erythritol kinase (296 aa).

K13 is a catalytic residue. Position 98-108 (98-108) interacts with ATP; sequence PVAAGIGGGSA. D140 is a catalytic residue.

The protein belongs to the GHMP kinase family. IspE subfamily.

It carries out the reaction 4-CDP-2-C-methyl-D-erythritol + ATP = 4-CDP-2-C-methyl-D-erythritol 2-phosphate + ADP + H(+). The protein operates within isoprenoid biosynthesis; isopentenyl diphosphate biosynthesis via DXP pathway; isopentenyl diphosphate from 1-deoxy-D-xylulose 5-phosphate: step 3/6. Functionally, catalyzes the phosphorylation of the position 2 hydroxy group of 4-diphosphocytidyl-2C-methyl-D-erythritol. This Rhodopseudomonas palustris (strain HaA2) protein is 4-diphosphocytidyl-2-C-methyl-D-erythritol kinase.